Consider the following 266-residue polypeptide: Pyridoxal phosphate phosphatase YigL (266 aa).

D8 serves as the catalytic Nucleophile. D8 serves as a coordination point for Mg(2+). L9 lines the phosphate pocket. Position 10 (D10) interacts with Mg(2+). Phosphate contacts are provided by residues 42 to 43 and K191; that span reads TG. Position 214 (D214) interacts with Mg(2+). N217 contributes to the phosphate binding site.

It belongs to the HAD-like hydrolase superfamily. Cof family. Requires Mg(2+) as cofactor. Mn(2+) serves as cofactor. Co(2+) is required as a cofactor. It depends on Zn(2+) as a cofactor.

The enzyme catalyses pyridoxal 5'-phosphate + H2O = pyridoxal + phosphate. The catalysed reaction is sugar phosphate + H2O = sugar + phosphate.. Its function is as follows. Catalyzes Strongly the dephosphorylation of pyridoxal-phosphate (PLP) and moderately the dephosphorylation of 2-deoxyglucose 6-phosphate (2bGLU6P) and beta-glucose 6-phosphate (bGlu6P). Also hydrolyzes both purines (GMP and IMP) and pyrimidines as secondary substrates. The polypeptide is Pyridoxal phosphate phosphatase YigL (yigL) (Escherichia coli (strain K12)).